We begin with the raw amino-acid sequence, 29 residues long: Orphan peptide CllNtx (29 aa).

In terms of processing, contains 3 disulfide bonds. As to expression, expressed by the venom gland.

It is found in the secreted. Its function is as follows. May act as a toxin. The chain is Orphan peptide CllNtx from Centruroides limpidus (Mexican scorpion).